Consider the following 1024-residue polypeptide: Eukaryotic translation initiation factor 3 subunit A (1024 aa).

Positions Val-331 to Phe-508 constitute a PCI domain. Coiled-coil stretches lie at residues Ala-575 to Ala-717 and Lys-777 to Arg-889. Composition is skewed to basic and acidic residues over residues Lys-797–Ala-866 and Asp-873–Arg-886. 2 disordered regions span residues Lys-797 to Arg-973 and Ala-1001 to Ala-1024. 2 stretches are compositionally biased toward low complexity: residues Ala-890 to Ala-906 and Lys-946 to Ala-971.

The protein belongs to the eIF-3 subunit A family. As to quaternary structure, component of the eukaryotic translation initiation factor 3 (eIF-3) complex.

It is found in the cytoplasm. In terms of biological role, RNA-binding component of the eukaryotic translation initiation factor 3 (eIF-3) complex, which is involved in protein synthesis of a specialized repertoire of mRNAs and, together with other initiation factors, stimulates binding of mRNA and methionyl-tRNAi to the 40S ribosome. The eIF-3 complex specifically targets and initiates translation of a subset of mRNAs involved in cell proliferation. In Mycosarcoma maydis (Corn smut fungus), this protein is Eukaryotic translation initiation factor 3 subunit A.